A 246-amino-acid polypeptide reads, in one-letter code: Osmotin-like protein TPM-1 (246 aa).

An N-terminal signal peptide occupies residues 1–21 (MAYLRSSFVFFLLAFVTYTYA). 8 cysteine pairs are disulfide-bonded: cysteine 30–cysteine 225, cysteine 72–cysteine 82, cysteine 87–cysteine 93, cysteine 141–cysteine 213, cysteine 146–cysteine 196, cysteine 154–cysteine 164, cysteine 168–cysteine 177, and cysteine 178–cysteine 183.

The protein belongs to the thaumatin family.

The protein localises to the vacuole. The catalysed reaction is Endohydrolysis of (1-&gt;3)- or (1-&gt;4)-linkages in beta-D-glucans when the glucose residue whose reducing group is involved in the linkage to be hydrolyzed is itself substituted at C-3.. In terms of biological role, antifungal protein that inhibits the growth of several phytopathogenic fungi (e.g. Trichothecium roseum, Fusarium oxysporum, Phytophthora citrophthora and Colletotrichum coccodes). May bind to beta-glucans and have beta-1,3-D-glucanase activity. This chain is Osmotin-like protein TPM-1, found in Solanum lycopersicum (Tomato).